We begin with the raw amino-acid sequence, 148 residues long: Truncated transcription factor CAULIFLOWER D (148 aa).

The MADS-box domain occupies 1–61; that stretch reads MGRGRVEMKR…GKLFEYSSES (61 aa). The 59-residue stretch at 90-148 folds into the K-box; partial domain; it reads QTNWSMEYSRLKAKIELWERNQRHYLGEDLESISIKELQNLEQQLDTSLKHIRSRKVCK.

In terms of assembly, homodimer capable of binding to CArG-box sequences.

The protein localises to the nucleus. In terms of biological role, probable transcription factor that promotes early floral meristem identity in synergy with APETALA1, FRUITFULL and LEAFY. Is required subsequently for the transition of an inflorescence meristem into a floral meristem. Seems to be partially redundant to the function of APETALA1. In Brassica oleracea var. botrytis (Cauliflower), this protein is Truncated transcription factor CAULIFLOWER D (CAL-D).